We begin with the raw amino-acid sequence, 278 residues long: Biotin synthase (278 aa).

Positions 1–227 (MQIMLCAISN…QSVVMVAGGR (227 aa)) constitute a Radical SAM core domain. 3 residues coordinate [4Fe-4S] cluster: Cys-16, Cys-20, and Cys-23. [2Fe-2S] cluster-binding residues include Cys-60, Cys-95, and Cys-153.

The protein belongs to the radical SAM superfamily. Biotin synthase family. Homodimer. The cofactor is [4Fe-4S] cluster. It depends on [2Fe-2S] cluster as a cofactor.

The catalysed reaction is (4R,5S)-dethiobiotin + (sulfur carrier)-SH + 2 reduced [2Fe-2S]-[ferredoxin] + 2 S-adenosyl-L-methionine = (sulfur carrier)-H + biotin + 2 5'-deoxyadenosine + 2 L-methionine + 2 oxidized [2Fe-2S]-[ferredoxin]. It functions in the pathway cofactor biosynthesis; biotin biosynthesis; biotin from 7,8-diaminononanoate: step 2/2. Catalyzes the conversion of dethiobiotin (DTB) to biotin by the insertion of a sulfur atom into dethiobiotin via a radical-based mechanism. The sequence is that of Biotin synthase from Campylobacter jejuni (strain RM1221).